The sequence spans 203 residues: Small ribosomal subunit protein uS5 (203 aa).

Residues 49 to 112 enclose the S5 DRBM domain; that stretch reads FEERVVKIKR…KNANNNLIKV (64 aa).

Belongs to the universal ribosomal protein uS5 family. In terms of assembly, part of the 30S ribosomal subunit. Contacts proteins S4 and S8.

Functionally, with S4 and S12 plays an important role in translational accuracy. In terms of biological role, located at the back of the 30S subunit body where it stabilizes the conformation of the head with respect to the body. The protein is Small ribosomal subunit protein uS5 of Ureaplasma parvum serovar 3 (strain ATCC 700970).